A 183-amino-acid polypeptide reads, in one-letter code: Potassium-transporting ATPase KdpC subunit (183 aa).

The chain crosses the membrane as a helical span at residues 11–31; it reads LALLMTLLTGVLYPLAVTGVA.

Belongs to the KdpC family. As to quaternary structure, the system is composed of three essential subunits: KdpA, KdpB and KdpC.

It is found in the cell inner membrane. In terms of biological role, part of the high-affinity ATP-driven potassium transport (or Kdp) system, which catalyzes the hydrolysis of ATP coupled with the electrogenic transport of potassium into the cytoplasm. This subunit acts as a catalytic chaperone that increases the ATP-binding affinity of the ATP-hydrolyzing subunit KdpB by the formation of a transient KdpB/KdpC/ATP ternary complex. The polypeptide is Potassium-transporting ATPase KdpC subunit (Pseudomonas putida (strain GB-1)).